The following is a 314-amino-acid chain: Thioredoxin reductase aclD (314 aa).

Residues 13 to 16, 35 to 40, histidine 47, and alanine 112 each bind FAD; these read GGPA and DSKSYR. Cysteine 136 and cysteine 139 form a disulfide bridge. FAD contacts are provided by residues aspartate 281 and 288–289; that span reads AA.

It belongs to the class-II pyridine nucleotide-disulfide oxidoreductase family. In terms of assembly, homodimer. It depends on FAD as a cofactor.

It functions in the pathway mycotoxin biosynthesis. Functionally, thioredoxin reductase; part of the gene cluster that mediates the biosynthesis of aspirochlorine (or antibiotic A30641), an unusual halogenated spiro compound with distinctive antifungal properties due to selective inhibition of protein biosynthesis, and which is also active against bacteria, viruses, and murine tumor cells. The non-ribosomal peptide synthetase (NRPS) aclP is responsible the formation of the diketopiperazine (DKP) core from the condensation of 2 phenylalanine residues. One Phe residue is tailored into chlorotyrosine by hydroxylation and chlorination, whereas the second Phe undergoes an unprecedented C-C bond cleavage to be converted into glycine. After formation of the DKP, sulfur is incorporated into the DKP by conjugation with glutathione by aclG, followed by its stepwise degradation to the thiol by aclI, aclJ and aclK, and the dithiol oxidation by aclT. In addition, oxygenases (aclB, aclC, aclL and aclO) and O-methyltransferases (aclM and aclU) act as tailoring enzymes to produce the intermediate dechloroaspirochlorine. Ultimately, chlorination of dechloroaspirochlorine by the halogenase aclH is the last step in the aspirochlorine pathway. In Aspergillus oryzae (strain ATCC 42149 / RIB 40) (Yellow koji mold), this protein is Thioredoxin reductase aclD.